Consider the following 181-residue polypeptide: ATP synthase subunit delta (181 aa).

The protein belongs to the ATPase delta chain family. F-type ATPases have 2 components, F(1) - the catalytic core - and F(0) - the membrane proton channel. F(1) has five subunits: alpha(3), beta(3), gamma(1), delta(1), epsilon(1). F(0) has three main subunits: a(1), b(2) and c(10-14). The alpha and beta chains form an alternating ring which encloses part of the gamma chain. F(1) is attached to F(0) by a central stalk formed by the gamma and epsilon chains, while a peripheral stalk is formed by the delta and b chains.

Its subcellular location is the cell membrane. In terms of biological role, f(1)F(0) ATP synthase produces ATP from ADP in the presence of a proton or sodium gradient. F-type ATPases consist of two structural domains, F(1) containing the extramembraneous catalytic core and F(0) containing the membrane proton channel, linked together by a central stalk and a peripheral stalk. During catalysis, ATP synthesis in the catalytic domain of F(1) is coupled via a rotary mechanism of the central stalk subunits to proton translocation. Functionally, this protein is part of the stalk that links CF(0) to CF(1). It either transmits conformational changes from CF(0) to CF(1) or is implicated in proton conduction. The protein is ATP synthase subunit delta of Mycoplasmoides gallisepticum (strain R(low / passage 15 / clone 2)) (Mycoplasma gallisepticum).